The sequence spans 401 residues: MLDKQKFVSKLVTTNDTKIVLLVMDGLGDIPVNGKTPLQAASTPNLDSLAKESDLGQTVPVLPGITPGSGPGHLSLFGYDPIKYQIGRGILEALGIGVEVGEKDVVARANFATWDGNVVLDRRAGRPATEESAKVVQLLSEKIKKIEDVEITFYPGKEHRFVVKFTGEGLGDRVTDADPQKEGHPMVWAEGLDEPSKKTARIANELIRKIAEVLKDNPKINFALIRGFSKYPDLPKFPEIYKLRAGAIATYPMYRGLAKLVGMEIIETGQTVEDEINTLKEKWNDFDFFYVHVKKTDSYGEDGKFDEKVKVIEEVDRVIPEILALKPDVLVITGDHSTPVPLKAHSWHPVPLLIWSRYTRRGLSQAFNEFECARGTLGTIHASDVMTLALAYAGRLEKFGA.

The protein belongs to the BPG-independent phosphoglycerate mutase family. A-PGAM subfamily.

The enzyme catalyses (2R)-2-phosphoglycerate = (2R)-3-phosphoglycerate. The protein operates within carbohydrate degradation; glycolysis; pyruvate from D-glyceraldehyde 3-phosphate: step 3/5. Functionally, catalyzes the interconversion of 2-phosphoglycerate and 3-phosphoglycerate. In Thermotoga neapolitana (strain ATCC 49049 / DSM 4359 / NBRC 107923 / NS-E), this protein is Probable 2,3-bisphosphoglycerate-independent phosphoglycerate mutase.